The sequence spans 431 residues: Histidinol dehydrogenase (431 aa).

Tyr-124, Gln-187, and Asn-210 together coordinate NAD(+). 3 residues coordinate substrate: Ser-236, Gln-258, and His-261. Zn(2+) contacts are provided by Gln-258 and His-261. Catalysis depends on proton acceptor residues Glu-325 and His-326. Residues His-326, Asp-359, Glu-413, and His-418 each contribute to the substrate site. Asp-359 lines the Zn(2+) pocket. His-418 contacts Zn(2+).

The protein belongs to the histidinol dehydrogenase family. Zn(2+) is required as a cofactor.

It catalyses the reaction L-histidinol + 2 NAD(+) + H2O = L-histidine + 2 NADH + 3 H(+). It functions in the pathway amino-acid biosynthesis; L-histidine biosynthesis; L-histidine from 5-phospho-alpha-D-ribose 1-diphosphate: step 9/9. Its function is as follows. Catalyzes the sequential NAD-dependent oxidations of L-histidinol to L-histidinaldehyde and then to L-histidine. This chain is Histidinol dehydrogenase, found in Legionella pneumophila subsp. pneumophila (strain Philadelphia 1 / ATCC 33152 / DSM 7513).